Here is a 411-residue protein sequence, read N- to C-terminus: Tyrosine--tRNA ligase (411 aa).

Y34 is a binding site for L-tyrosine. A 'HIGH' region motif is present at residues 39 to 48 (CTATSLHIGS). Positions 171 and 175 each coordinate L-tyrosine. Positions 231-235 (KMGKT) match the 'KMSKS' region motif. Residue K234 coordinates ATP. An S4 RNA-binding domain is found at 345-411 (ISAYNLFYNA…GKKRHILVKV (67 aa)).

This sequence belongs to the class-I aminoacyl-tRNA synthetase family. TyrS type 1 subfamily. Homodimer.

It is found in the cytoplasm. The enzyme catalyses tRNA(Tyr) + L-tyrosine + ATP = L-tyrosyl-tRNA(Tyr) + AMP + diphosphate + H(+). In terms of biological role, catalyzes the attachment of tyrosine to tRNA(Tyr) in a two-step reaction: tyrosine is first activated by ATP to form Tyr-AMP and then transferred to the acceptor end of tRNA(Tyr). The protein is Tyrosine--tRNA ligase of Rickettsia prowazekii (strain Madrid E).